A 982-amino-acid chain; its full sequence is Glycine dehydrogenase (decarboxylating) (982 aa).

Lys-729 carries the post-translational modification N6-(pyridoxal phosphate)lysine.

Belongs to the GcvP family. As to quaternary structure, the glycine cleavage system is composed of four proteins: P, T, L and H. Pyridoxal 5'-phosphate is required as a cofactor.

The enzyme catalyses N(6)-[(R)-lipoyl]-L-lysyl-[glycine-cleavage complex H protein] + glycine + H(+) = N(6)-[(R)-S(8)-aminomethyldihydrolipoyl]-L-lysyl-[glycine-cleavage complex H protein] + CO2. The glycine cleavage system catalyzes the degradation of glycine. The P protein binds the alpha-amino group of glycine through its pyridoxal phosphate cofactor; CO(2) is released and the remaining methylamine moiety is then transferred to the lipoamide cofactor of the H protein. This Ralstonia nicotianae (strain ATCC BAA-1114 / GMI1000) (Ralstonia solanacearum) protein is Glycine dehydrogenase (decarboxylating).